Consider the following 195-residue polypeptide: MIIGLTGGIGVGKSFIANCFKEFGAAVFDADFIVHQLYRVDKNIISYAEKNFPGAIANGEIDKTVLSKYFLDYDENWKQFQSLVHSAVQNELEIFIAQDKEINRKLLVLDVPLLLETRFHLYCDFIIFIYADSAAQAQRLSERNIDKEKLDLISSIQLPVKEKRQMSDFTIDTSTSKEHVLSQVKDIVDSLSLSS.

The DPCK domain occupies 2 to 195 (IIGLTGGIGV…DIVDSLSLSS (194 aa)). 10-15 (GVGKSF) is an ATP binding site.

Belongs to the CoaE family.

The protein resides in the cytoplasm. It catalyses the reaction 3'-dephospho-CoA + ATP = ADP + CoA + H(+). It participates in cofactor biosynthesis; coenzyme A biosynthesis; CoA from (R)-pantothenate: step 5/5. In terms of biological role, catalyzes the phosphorylation of the 3'-hydroxyl group of dephosphocoenzyme A to form coenzyme A. This Wolbachia sp. subsp. Brugia malayi (strain TRS) protein is Dephospho-CoA kinase.